A 499-amino-acid chain; its full sequence is Glycerol kinase (499 aa).

Residue threonine 12 participates in ADP binding. ATP-binding residues include threonine 12, threonine 13, and serine 14. A sn-glycerol 3-phosphate-binding site is contributed by threonine 12. Arginine 16 is an ADP binding site. Positions 82, 83, 134, and 240 each coordinate sn-glycerol 3-phosphate. The glycerol site is built by arginine 82, glutamate 83, tyrosine 134, aspartate 240, and glutamine 241. ADP is bound by residues threonine 262 and glycine 306. ATP-binding residues include threonine 262, glycine 306, glutamine 310, and glycine 412. The ADP site is built by glycine 412 and asparagine 416.

Belongs to the FGGY kinase family.

The catalysed reaction is glycerol + ATP = sn-glycerol 3-phosphate + ADP + H(+). It functions in the pathway polyol metabolism; glycerol degradation via glycerol kinase pathway; sn-glycerol 3-phosphate from glycerol: step 1/1. Inhibited by fructose 1,6-bisphosphate (FBP). Functionally, key enzyme in the regulation of glycerol uptake and metabolism. Catalyzes the phosphorylation of glycerol to yield sn-glycerol 3-phosphate. This Nocardia farcinica (strain IFM 10152) protein is Glycerol kinase.